A 375-amino-acid polypeptide reads, in one-letter code: Peptide chain release factor 1 (375 aa).

Glutamine 237 bears the N5-methylglutamine mark. The span at 289–299 (AAREAQERQER) shows a compositional bias: basic and acidic residues. Residues 289-326 (AAREAQERQERASQVGSGDRSEKIRTYNYPQNRVTDHR) are disordered.

It belongs to the prokaryotic/mitochondrial release factor family. Post-translationally, methylated by PrmC. Methylation increases the termination efficiency of RF1.

The protein localises to the cytoplasm. In terms of biological role, peptide chain release factor 1 directs the termination of translation in response to the peptide chain termination codons UAG and UAA. The polypeptide is Peptide chain release factor 1 (prfA) (Deinococcus radiodurans (strain ATCC 13939 / DSM 20539 / JCM 16871 / CCUG 27074 / LMG 4051 / NBRC 15346 / NCIMB 9279 / VKM B-1422 / R1)).